The primary structure comprises 181 residues: Acireductone dioxygenase (181 aa).

Histidine 97, histidine 99, glutamate 103, and histidine 141 together coordinate Fe(2+). Residues histidine 97, histidine 99, glutamate 103, and histidine 141 each coordinate Ni(2+).

It belongs to the acireductone dioxygenase (ARD) family. As to quaternary structure, monomer. Fe(2+) serves as cofactor. The cofactor is Ni(2+).

The catalysed reaction is 1,2-dihydroxy-5-(methylsulfanyl)pent-1-en-3-one + O2 = 3-(methylsulfanyl)propanoate + CO + formate + 2 H(+). The enzyme catalyses 1,2-dihydroxy-5-(methylsulfanyl)pent-1-en-3-one + O2 = 4-methylsulfanyl-2-oxobutanoate + formate + 2 H(+). It functions in the pathway amino-acid biosynthesis; L-methionine biosynthesis via salvage pathway; L-methionine from S-methyl-5-thio-alpha-D-ribose 1-phosphate: step 5/6. Catalyzes 2 different reactions between oxygen and the acireductone 1,2-dihydroxy-3-keto-5-methylthiopentene (DHK-MTPene) depending upon the metal bound in the active site. Fe-containing acireductone dioxygenase (Fe-ARD) produces formate and 2-keto-4-methylthiobutyrate (KMTB), the alpha-ketoacid precursor of methionine in the methionine recycle pathway. Ni-containing acireductone dioxygenase (Ni-ARD) produces methylthiopropionate, carbon monoxide and formate, and does not lie on the methionine recycle pathway. This is Acireductone dioxygenase from Pseudomonas fluorescens (strain ATCC BAA-477 / NRRL B-23932 / Pf-5).